Here is a 457-residue protein sequence, read N- to C-terminus: Methylphosphonate synthase (457 aa).

The region spanning Ile23–Phe74 is the HTH cro/C1-type 1 domain. The H-T-H motif DNA-binding region spans Glu32–Ser50. 2 residues coordinate Fe cation: His148 and His190. An HTH cro/C1-type 2 domain is found at Leu247–Leu301. Positions Lys258–Thr277 form a DNA-binding region, H-T-H motif.

This sequence belongs to the non-heme iron-dependent dioxygenase family. The cofactor is Fe(2+).

The enzyme catalyses 2-hydroxyethylphosphonate + O2 = methylphosphonate + hydrogencarbonate + H(+). Its pathway is phosphorus metabolism; phosphonate biosynthesis. Its function is as follows. Catalyzes the conversion of 2-hydroxyethylphosphonate into methylphosphonate in the methylphosphonate biosynthesis pathway. The sequence is that of Methylphosphonate synthase (mpnS) from Nitrosopumilus maritimus (strain SCM1).